The following is a 346-amino-acid chain: MARKSNLPVLLVPFLLCQALVRCSSPLPLVVNTWPFKNATEAAWRALASGGSALDAVESGCAMCEREQCDGSVGFGGSPDELGETTLDAMIMDGTTMDVGAVGDLRRIKNAIGVARKVLEHTTHTLLVGESATTFAQSMGFINEDLSTTASQALHSDWLARNCQPNYWRNVIPDPSKYCGPYKPPGILKQDIPIHKETEDDRGHDTIGMVVIHKTGHIAAGTSTNGIKFKIHGRVGDSPIPGAGAYADDTAGAAAATGNGDILMRFLPSYQAVEYMRRGEDPTIACQKVISRIQKHFPEFFGAVICANVTGSYGAACNKLSTFTQFSFMVYNSEKNQPTEEKVDCI.

A signal peptide spans 1–23 (MARKSNLPVLLVPFLLCQALVRC). At Ser-24 the chain carries Blocked amino end (Ser). The N-linked (GlcNAc...) asparagine glycan is linked to Asn-38. Cystine bridges form between Cys-64–Cys-69 and Cys-163–Cys-179. The Nucleophile role is filled by Thr-206. Residues 234 to 237 (RVGD) and 257 to 260 (TGNG) contribute to the substrate site. A disulfide bridge connects residues Cys-286 and Cys-306. Residue Asn-308 is glycosylated (N-linked (GlcNAc...) asparagine). A disulfide bond links Cys-317 and Cys-345.

It belongs to the Ntn-hydrolase family. In terms of assembly, heterotetramer of two alpha and two beta chains arranged as a dimer of alpha/beta heterodimers. Post-translationally, cleaved into an alpha and beta chain by autocatalysis; this activates the enzyme. The N-terminal residue of the beta subunit is responsible for the nucleophile hydrolase activity. N-glycosylated.

It is found in the lysosome. It carries out the reaction N(4)-(beta-N-acetyl-D-glucosaminyl)-L-asparagine + H2O = N-acetyl-beta-D-glucosaminylamine + L-aspartate + H(+). Cleaves the GlcNAc-Asn bond which joins oligosaccharides to the peptide of asparagine-linked glycoproteins. The polypeptide is N(4)-(beta-N-acetylglucosaminyl)-L-asparaginase (AGA) (Homo sapiens (Human)).